Reading from the N-terminus, the 292-residue chain is Enoyl-CoA hydratase domain-containing protein 2, mitochondrial (292 aa).

The transit peptide at 1–35 (MLRVLCLLRPWRPLRARGCASDGAAGGSEIQVRAL) directs the protein to the mitochondrion. Lys97 is subject to N6-acetyllysine; alternate. Position 97 is an N6-succinyllysine; alternate (Lys97).

Belongs to the enoyl-CoA hydratase/isomerase family.

The protein localises to the mitochondrion. The sequence is that of Enoyl-CoA hydratase domain-containing protein 2, mitochondrial (ECHDC2) from Homo sapiens (Human).